We begin with the raw amino-acid sequence, 295 residues long: Acetylglutamate kinase (295 aa).

Substrate contacts are provided by residues 66-67 (GG), Arg88, and Asn193.

The protein belongs to the acetylglutamate kinase family. ArgB subfamily.

Its subcellular location is the cytoplasm. The enzyme catalyses N-acetyl-L-glutamate + ATP = N-acetyl-L-glutamyl 5-phosphate + ADP. It participates in amino-acid biosynthesis; L-arginine biosynthesis; N(2)-acetyl-L-ornithine from L-glutamate: step 2/4. Its function is as follows. Catalyzes the ATP-dependent phosphorylation of N-acetyl-L-glutamate. This Afipia carboxidovorans (strain ATCC 49405 / DSM 1227 / KCTC 32145 / OM5) (Oligotropha carboxidovorans) protein is Acetylglutamate kinase.